The chain runs to 185 residues: Ubiquitin-conjugating enzyme E2 5 (185 aa).

Residues methionine 1 to lysine 148 enclose the UBC core domain. The active-site Glycyl thioester intermediate is the cysteine 85. The disordered stretch occupies residues tyrosine 146–proline 185. The segment covering glutamate 154–valine 177 has biased composition (acidic residues).

It belongs to the ubiquitin-conjugating enzyme family. As to expression, expressed in developing ovules, but not in vascular tissues.

The catalysed reaction is S-ubiquitinyl-[E1 ubiquitin-activating enzyme]-L-cysteine + [E2 ubiquitin-conjugating enzyme]-L-cysteine = [E1 ubiquitin-activating enzyme]-L-cysteine + S-ubiquitinyl-[E2 ubiquitin-conjugating enzyme]-L-cysteine.. It participates in protein modification; protein ubiquitination. Its function is as follows. Accepts the ubiquitin from the E1 complex and catalyzes its covalent attachment to other proteins. The chain is Ubiquitin-conjugating enzyme E2 5 (UBC5) from Arabidopsis thaliana (Mouse-ear cress).